Reading from the N-terminus, the 220-residue chain is Ribosome biogenesis protein 15 (220 aa).

A disordered region spans residues 1–82 (MVKSTSKTST…KQANEKKSKD (82 aa)). Residues 9 to 30 (STKETVTKQPTEEKPIQEKEEL) show a composition bias toward basic and acidic residues. Positions 39–60 (SDEEDEKDEDEIEGLAASDDEQ) are enriched in acidic residues. An RRM domain is found at 91–169 (GIIYVSRLPH…HLLQVRVLPK (79 aa)).

As to quaternary structure, component of the pre-66S ribosomal particle. Interacts with NOP7 and RRP1.

The protein resides in the cytoplasm. It localises to the nucleus. It is found in the nucleolus. Its function is as follows. Involved in the biogenesis of the 60S ribosomal subunit. Required for pre-rRNA processing and cytokinesis. Associates with the precursors of the 25S and 5.8S rRNAs. This is Ribosome biogenesis protein 15 from Saccharomyces cerevisiae (strain ATCC 204508 / S288c) (Baker's yeast).